A 498-amino-acid polypeptide reads, in one-letter code: Protein flp (498 aa).

The next 4 membrane-spanning stretches (helical) occupy residues 6 to 26, 389 to 409, 433 to 453, and 471 to 491; these read LYFL…IYIT, FNIV…FSAY, LSLC…YLIL, and LALI…LLFL.

The protein resides in the cell membrane. Its function is as follows. Its precise function is unknown. Has no penicillin-binding activity and is not involved in methicillin resistance. This chain is Protein flp (flp), found in Staphylococcus aureus (strain NCTC 8325 / PS 47).